Reading from the N-terminus, the 97-residue chain is Apolipoprotein C-II (97 aa).

Residues 1 to 22 (MGSRFFLALFLALLVLGNEVQG) form the signal peptide. The tract at residues 63 to 71 (SVDEKLRDM) is lipid binding. The interval 75-97 (SSAAMTTYAGIFTDQLLTLLKGE) is lipoprotein lipase cofactor.

It belongs to the apolipoprotein C2 family. Proapolipoprotein C-II is synthesized as a sialic acid containing glycoprotein which is subsequently desialylated prior to its proteolytic processing. Post-translationally, proapolipoprotein C-II, the major form found in plasma undergoes proteolytic cleavage of its N-terminal hexapeptide to generate the mature form apolipoprotein C-II, which occurs as the minor form in plasma.

Its subcellular location is the secreted. Functionally, component of chylomicrons, very low-density lipoproteins (VLDL), low-density lipoproteins (LDL), and high-density lipoproteins (HDL) in plasma. Plays an important role in lipoprotein metabolism as an activator of lipoprotein lipase. The chain is Apolipoprotein C-II (Apoc2) from Rattus norvegicus (Rat).